A 378-amino-acid chain; its full sequence is Transcription initiation factor IIA subunit 1 (378 aa).

Position 2 is an N-acetylalanine (Ala-2). 3 stretches are compositionally biased toward low complexity: residues 69–79, 89–106, and 247–281; these read QVQQQHQPQQQ, QQAQ…TQQV, and PAQA…TGDT. 2 disordered regions span residues 69–108 and 247–331; these read QVQQ…QVLI and PAQA…QELF. Residues Ser-282, Ser-283, Ser-318, and Ser-323 each carry the phosphoserine; by TAF1 modification. The span at 282–331 shows a compositional bias: acidic residues; that stretch reads SSEEDEDEEEDYDDDEEEDKEKDGAEDGQVEEEPLNSEDDVSDEEGQELF. 2 residues coordinate DNA: His-345 and Arg-346.

The protein belongs to the TFIIA subunit 1 family. In terms of assembly, TFIIA is a heterodimer of the large unprocessed subunit 1 and a small subunit gamma. It was originally believed to be a heterotrimer of an alpha (p35), a beta (p19) and a gamma subunit (p12). TFIIA forms a complex with TBP. Part of TBP-based Pol II pre-initiation complex (PIC), in which Pol II core assembles with general transcription factors and other specific initiation factors including GTF2E1, GTF2E2, GTF2F1, GTF2F2, TCEA1, ERCC2, ERCC3, GTF2H2, GTF2H3, GTF2H4, GTF2H5, GTF2A1, GTF2A2, GTF2B and TBP; this large multi-subunit PIC complex mediates DNA unwinding and targets Pol II core to the transcription start site where the first phosphodiester bond forms. Post-translationally, the alpha and beta subunits are postranslationally produced from the precursor form by TASP1. The cleavage promotes proteasomal degradation. As to expression, expressed in pachytene spermatocytes and spermatids.

It localises to the nucleus. In terms of biological role, TFIIA is a component of the transcription machinery of RNA polymerase II and plays an important role in transcriptional activation. TFIIA in a complex with TBP mediates transcriptional activity. This Mus musculus (Mouse) protein is Transcription initiation factor IIA subunit 1 (Gtf2a1).